We begin with the raw amino-acid sequence, 542 residues long: Zinc finger CCHC domain-containing protein 7 (542 aa).

A disordered region spans residues 110-144 (QAQEKTQSPATPRSNKVANKCKRSNKKPEPEESPS). Positions 112–126 (QEKTQSPATPRSNKV) are enriched in polar residues. Glycyl lysine isopeptide (Lys-Gly) (interchain with G-Cter in SUMO2) cross-links involve residues K129 and K136. Residue S142 is modified to Phosphoserine. Residues K236 and K251 each participate in a glycyl lysine isopeptide (Lys-Gly) (interchain with G-Cter in SUMO2) cross-link. 3 consecutive CCHC-type zinc fingers follow at residues 238–255 (VTCRNCDKRGHLSKNCPL), 260–277 (RPCCLCSERGHLQYGCPA), and 301–318 (KRCDRCDMIGHYADACPE). K336 is covalently cross-linked (Glycyl lysine isopeptide (Lys-Gly) (interchain with G-Cter in SUMO2)). A CCHC-type 4 zinc finger spans residues 345–362 (VYCYNCAQKGHYGHECTE). A disordered region spans residues 396-542 (LKDIKKNGDF…RKKKPKSSGF (147 aa)). K410 is covalently cross-linked (Glycyl lysine isopeptide (Lys-Gly) (interchain with G-Cter in SUMO2)). Basic and acidic residues predominate over residues 412 to 421 (PHGEETDRYH). Over residues 422 to 435 (HDRRKSRFSGKRSR) the composition is skewed to basic residues. A Glycyl lysine isopeptide (Lys-Gly) (interchain with G-Cter in SUMO2) cross-link involves residue K432. Residues 436–456 (WPRESKETQKEKTRGREGEKH) are compositionally biased toward basic and acidic residues. A Glycyl lysine isopeptide (Lys-Gly) (interchain with G-Cter in SUMO2) cross-link involves residue K474. A compositionally biased stretch (low complexity) spans 474 to 489 (KPNSSSSSNSQKPSKS). A phosphoserine mark is found at S478 and S480. Glycyl lysine isopeptide (Lys-Gly) (interchain with G-Cter in SUMO2) cross-links involve residues K485 and K488. Composition is skewed to basic and acidic residues over residues 499–510 (LREEKLRRESMR) and 518–528 (FVEDGSHDDLF). K531 is covalently cross-linked (Glycyl lysine isopeptide (Lys-Gly) (interchain with G-Cter in SUMO2)). A compositionally biased stretch (basic residues) spans 531-542 (KQRKKKPKSSGF).

As to quaternary structure, component of a nucleolar TRAMP-like complex, an ATP-dependent exosome regulatory complex consisting of a helicase (MTREX), an oligadenylate polymerase (TENT4B or TENT4A), and a substrate specific RNA-binding factor (ZCCHC7 or ZCCHC8). Several TRAMP-like complexes exist with specific compositions and are associated with nuclear, or nucleolar RNA exosomes.

The protein localises to the nucleus. The protein resides in the nucleolus. The sequence is that of Zinc finger CCHC domain-containing protein 7 (Zcchc7) from Rattus norvegicus (Rat).